We begin with the raw amino-acid sequence, 1867 residues long: Probable serine/threonine-protein kinase roco8 (1867 aa).

One can recognise a DEP 1 domain in the interval 16–93 (SSDGLQIKDR…DDYIFYQFDN (78 aa)). 2 disordered regions span residues 96–115 (NNNN…TTAT) and 121–225 (VSTK…NSFN). Residues 121-223 (VSTKIGSIGK…NSNSTYNSNS (103 aa)) are compositionally biased toward low complexity. The DEP 2 domain maps to 264–342 (GDKGLKLQKK…NNNNGGGGVM (79 aa)). LRR repeat units follow at residues 491–512 (RLDD…IINT), 515–536 (FLRI…ESIA), 540–561 (NLES…FSRL), 563–584 (LLTK…VFQL), 586–607 (NLEE…IGSL), 609–631 (SLEK…LGLL), 633–656 (RLKS…STLP), and 657–678 (LLEQ…ITSK). A Roc domain is found at 693-941 (GTETLSHIKL…NEIIQTLLNQ (249 aa)). 2 disordered regions span residues 763–813 (QNGI…KKRP) and 942–961 (SNNN…KQSN). Over residues 768–793 (TSSSNLNLSTGTLPPPTQLSSSTSEL) the composition is skewed to low complexity. Residues 974–1111 (PSIYITLETN…ILYTLKNNSN (138 aa)) form the COR domain. Residues 1163-1207 (SPSLSLSNSSQSVFTNPNNNNNNKSEQQQQQQQQQQQPQPISTSP) are disordered. A Protein kinase domain is found at 1456–1864 (LIYQEEIGVG…TLNEIKDSTI (409 aa)). Residues 1462-1470 (IGVGGFSRV) and lysine 1483 each bind ATP. The interval 1509–1546 (SNSSLSISLSSSTSSLSPPIVNNNNNNNNLNNNLNNLN) is disordered. Aspartate 1721 (proton acceptor) is an active-site residue.

It belongs to the protein kinase superfamily. TKL Ser/Thr protein kinase family. ROCO subfamily.

It catalyses the reaction L-seryl-[protein] + ATP = O-phospho-L-seryl-[protein] + ADP + H(+). It carries out the reaction L-threonyl-[protein] + ATP = O-phospho-L-threonyl-[protein] + ADP + H(+). This chain is Probable serine/threonine-protein kinase roco8 (roco8), found in Dictyostelium discoideum (Social amoeba).